The following is a 200-amino-acid chain: Holliday junction resolvase RecU (200 aa).

A disordered region spans residues 1-25 (MTIRYPNGKRYNQASQPQKTPIKTH). The segment covering 10–25 (RYNQASQPQKTPIKTH) has biased composition (polar residues). Residues Thr-85, Asp-87, Glu-100, and Gln-119 each contribute to the Mg(2+) site.

The protein belongs to the RecU family. Mg(2+) serves as cofactor.

The protein resides in the cytoplasm. It catalyses the reaction Endonucleolytic cleavage at a junction such as a reciprocal single-stranded crossover between two homologous DNA duplexes (Holliday junction).. In terms of biological role, endonuclease that resolves Holliday junction intermediates in genetic recombination. Cleaves mobile four-strand junctions by introducing symmetrical nicks in paired strands. Promotes annealing of linear ssDNA with homologous dsDNA. Required for DNA repair, homologous recombination and chromosome segregation. This Bacillus cereus (strain G9842) protein is Holliday junction resolvase RecU.